The sequence spans 33 residues: Cytochrome b6-f complex subunit 8 (33 aa).

The chain crosses the membrane as a helical span at residues 2 to 22 (IFQIGWAALAAIFTFSIAMVV).

This sequence belongs to the PetN family. As to quaternary structure, the 4 large subunits of the cytochrome b6-f complex are cytochrome b6, subunit IV (17 kDa polypeptide, PetD), cytochrome f and the Rieske protein, while the 4 small subunits are PetG, PetL, PetM and PetN. The complex functions as a dimer.

It localises to the cellular thylakoid membrane. In terms of biological role, component of the cytochrome b6-f complex, which mediates electron transfer between photosystem II (PSII) and photosystem I (PSI), cyclic electron flow around PSI, and state transitions. This chain is Cytochrome b6-f complex subunit 8, found in Prochlorococcus marinus (strain MIT 9301).